A 334-amino-acid chain; its full sequence is MTKTTILLLCGGGSSEHEISLVSANYIQQQLELTPEFHVIRVEMKKEGWFSEQGALVYLDTNSATLNSDKASYPIDFVVPCIHGFPGETGDIQSMLELAGIPYLGCGPEASANSFNKITSKLWYDALDIPNTPYLFLTQNTPSSIDKAKQAFGHWGSIFVKAARQGSSVGCYKVTTEDQIAPAIEAAFGFSEQVLVEQAVKPRELEVSAYEMNGKLYISKPGEVIAPEGTFYSYEEKYSANSHARTVLEAENLTEKHKELIQTYAERVFIHMKLRHLSRIDFFLTQEGQIYLNEVNTFPGMTPISMFPKMLEHNGHRFSEFLVQCVTNTLVNAK.

One can recognise an ATP-grasp domain in the interval K121–T327. Residue A151–E206 participates in ATP binding. 3 residues coordinate Mg(2+): D281, E294, and N296.

Belongs to the D-alanine--D-alanine ligase family. It depends on Mg(2+) as a cofactor. Requires Mn(2+) as cofactor.

The protein localises to the cytoplasm. It carries out the reaction 2 D-alanine + ATP = D-alanyl-D-alanine + ADP + phosphate + H(+). The protein operates within cell wall biogenesis; peptidoglycan biosynthesis. In terms of biological role, cell wall formation. This chain is D-alanine--D-alanine ligase, found in Vibrio cholerae serotype O1 (strain ATCC 39315 / El Tor Inaba N16961).